Consider the following 310-residue polypeptide: ADP-L-glycero-D-manno-heptose-6-epimerase (310 aa).

NADP(+) is bound by residues 10–11, 31–32, Lys-38, Lys-53, 75–79, and Asn-92; these read FI, DN, and EGACS. Tyr-140 (proton acceptor) is an active-site residue. Lys-144 is an NADP(+) binding site. Asn-169 contacts substrate. The NADP(+) site is built by Val-170 and Lys-178. The active-site Proton acceptor is Lys-178. Residues Ser-180, His-187, 201–204, Arg-209, and Tyr-272 each bind substrate; that span reads FEGS.

The protein belongs to the NAD(P)-dependent epimerase/dehydratase family. HldD subfamily. Homopentamer. Requires NADP(+) as cofactor.

The catalysed reaction is ADP-D-glycero-beta-D-manno-heptose = ADP-L-glycero-beta-D-manno-heptose. The protein operates within nucleotide-sugar biosynthesis; ADP-L-glycero-beta-D-manno-heptose biosynthesis; ADP-L-glycero-beta-D-manno-heptose from D-glycero-beta-D-manno-heptose 7-phosphate: step 4/4. Catalyzes the interconversion between ADP-D-glycero-beta-D-manno-heptose and ADP-L-glycero-beta-D-manno-heptose via an epimerization at carbon 6 of the heptose. This Klebsiella pneumoniae subsp. pneumoniae (strain ATCC 700721 / MGH 78578) protein is ADP-L-glycero-D-manno-heptose-6-epimerase.